A 386-amino-acid chain; its full sequence is uncharacterized protein (386 aa).

It belongs to the TelA family.

This is an uncharacterized protein from Bacillus subtilis (strain 168).